A 215-amino-acid chain; its full sequence is Elongation factor Ts (215 aa).

Positions 80–83 (TDFV) are involved in Mg(2+) ion dislocation from EF-Tu.

The protein belongs to the EF-Ts family.

The protein resides in the cytoplasm. Its function is as follows. Associates with the EF-Tu.GDP complex and induces the exchange of GDP to GTP. It remains bound to the aminoacyl-tRNA.EF-Tu.GTP complex up to the GTP hydrolysis stage on the ribosome. The protein is Elongation factor Ts of Alkaliphilus metalliredigens (strain QYMF).